Consider the following 528-residue polypeptide: Succinate-semialdehyde dehydrogenase, mitochondrial (528 aa).

The transit peptide at 1-34 (MVIGAAARVAIGGCRKLISSHTSLLLVSSQCRQM) directs the protein to the mitochondrion. 196 to 198 (TPW) is a binding site for NAD(+). Substrate is bound at residue R207. NAD(+)-binding positions include 222–225 (KPSE), 275–280 (GSTAVG), and E297. The active-site Proton acceptor is E297. R325 contributes to the substrate binding site. C331 (nucleophile) is an active-site residue. The cysteines at positions 331 and 333 are disulfide-linked. An NAD(+)-binding site is contributed by 428-430 (EIF). S488 serves as a coordination point for substrate.

Belongs to the aldehyde dehydrogenase family. As to quaternary structure, homotetramer. Expressed in developing leaf tissues.

It localises to the mitochondrion matrix. The enzyme catalyses succinate semialdehyde + NAD(+) + H2O = succinate + NADH + 2 H(+). The protein operates within amino-acid degradation; 4-aminobutanoate degradation. With respect to regulation, competitive inhibition by NADH. Inhibited by ATP, ADP and AMP. Redox-regulated. Inhibited under oxydizing conditions. Its function is as follows. Oxidizes specifically succinate semialdehyde. Involved in plant response to environmental stress by preventing the accumulation of reactive oxygen species, probably by regulating proline, gamma-hydroxybutyrate (GHB) and gamma-aminobutyrate (GABA) levels. Required for the maintenance of the shoot apical meristem (SAM) structure and subsequent adaxial-abaxial axis-dependent development of cotyledons and leaves. In Arabidopsis thaliana (Mouse-ear cress), this protein is Succinate-semialdehyde dehydrogenase, mitochondrial.